Consider the following 351-residue polypeptide: Probable aldo-keto reductase 2 (351 aa).

The active-site Proton donor is tyrosine 67. Histidine 134 is a binding site for substrate. Residue 213–223 (SPLGRGFFSAG) participates in NADP(+) binding. The interval 317-351 (YASTDDVRGDRYPQAMANTTWQNSETPPLSSWKAQ) is disordered. Over residues 332-351 (MANTTWQNSETPPLSSWKAQ) the composition is skewed to polar residues.

Belongs to the aldo/keto reductase family.

In Oryza sativa subsp. japonica (Rice), this protein is Probable aldo-keto reductase 2.